Reading from the N-terminus, the 619-residue chain is Chaperone protein HscA homolog (619 aa).

This sequence belongs to the heat shock protein 70 family.

Chaperone involved in the maturation of iron-sulfur cluster-containing proteins. Has a low intrinsic ATPase activity which is markedly stimulated by HscB. The polypeptide is Chaperone protein HscA homolog (Haemophilus influenzae (strain PittEE)).